The following is a 455-amino-acid chain: Epoxide hydrolase 1 (455 aa).

Residues 1–21 form a helical; Signal-anchor for type III membrane protein membrane-spanning segment; that stretch reads MWLELVLASLLGFVIYWFVSR. Over 22 to 455 the chain is Cytoplasmic; sequence DKEETLPLGD…RKFVSLAELQ (434 aa). Residue Asp226 is the Nucleophile of the active site. Arg295 carries the dimethylated arginine modification. Tyr374 serves as the catalytic Proton donor. His431 acts as the Proton acceptor in catalysis. Lys439 carries the N6-acetyllysine modification.

Belongs to the peptidase S33 family.

The protein localises to the microsome membrane. It is found in the endoplasmic reticulum membrane. It carries out the reaction cis-stilbene oxide + H2O = (1R,2R)-hydrobenzoin. The enzyme catalyses 1-(4-methoxyphenyl)-N-methyl-N-[(3-methyloxetan-3-yl)methyl]methanamine + H2O = 2-{[(4-methoxybenzyl)(methyl)amino]methyl}-2-methylpropane-1,3-diol. The catalysed reaction is 8,9-epoxy-(5Z,11Z,14Z)-eicosatrienoate + H2O = 8,9-dihydroxy-(5Z,11Z,14Z)-eicosatrienoate. It catalyses the reaction 11,12-epoxy-(5Z,8Z,14Z)-eicosatrienoate + H2O = 11,12-dihydroxy-(5Z,8Z,14Z)-eicosatrienoate. It carries out the reaction 2-(5Z,8Z,11Z,14Z-eicosatetraenoyl)-glycerol + H2O = glycerol + (5Z,8Z,11Z,14Z)-eicosatetraenoate + H(+). With respect to regulation, inhibited by 10-hydroxystearamide and methoxy-arachidonyl fluorophosphate. Biotransformation enzyme that catalyzes the hydrolysis of arene and aliphatic epoxides to less reactive and more water soluble dihydrodiols by the trans addition of water. May play a role in the metabolism of endogenous lipids such as epoxide-containing fatty acids. Metabolizes the abundant endocannabinoid 2-arachidonoylglycerol (2-AG) to free arachidonic acid (AA) and glycerol. Binds 20(S)-hydroxycholesterol (20(S)-OHC). The protein is Epoxide hydrolase 1 of Rattus norvegicus (Rat).